A 356-amino-acid chain; its full sequence is Arginine kinase (356 aa).

Residue Ala-2 is modified to N-acetylalanine. Positions 9–91 constitute a Phosphagen kinase N-terminal domain; it reads KLEEGFKKLE…FDPIIEDYHK (83 aa). 64–68 serves as a coordination point for L-arginine; the sequence is GVGIY. The Phosphagen kinase C-terminal domain occupies 119-356; it reads FVISTRVRCG…LELIKIEKEM (238 aa). Residues 122–126 and His-185 each bind ATP; that span reads STRVR. Glu-225 contacts L-arginine. An ATP-binding site is contributed by Arg-229. An L-arginine-binding site is contributed by Cys-271. ATP contacts are provided by residues 280-284 and 309-314; these read RASVH and RGTRGE. L-arginine is bound at residue Glu-314.

The protein belongs to the ATP:guanido phosphotransferase family.

The enzyme catalyses L-arginine + ATP = N(omega)-phospho-L-arginine + ADP + H(+). The polypeptide is Arginine kinase (Homarus gammarus (European lobster)).